The sequence spans 78 residues: Large ribosomal subunit protein bL28 (78 aa).

The tract at residues 1–25 is disordered; the sequence is MSRVCQVTGKRPAVGNNRSHAKNAT.

The protein belongs to the bacterial ribosomal protein bL28 family.

The sequence is that of Large ribosomal subunit protein bL28 from Vibrio cholerae serotype O1 (strain ATCC 39541 / Classical Ogawa 395 / O395).